Consider the following 574-residue polypeptide: 3-hydroxy-3-methylglutaryl-coenzyme A reductase 3 (574 aa).

A disordered region spans residues 1-30; the sequence is MDVRRRPVKPLYPSEHISSGEPLKPHNQDS. The helical transmembrane segment at 41 to 61 threads the bilayer; it reads PLYLTNGLFFTMFFSVMYFLL. N-linked (GlcNAc...) asparagine glycosylation is present at N78. Residues 83–103 form a helical membrane-spanning segment; it reads VAMVSLIASVIYLLGFFGIGF. The interval 104–161 is linker; sequence VQSFVSKGNNDSWDVEDESPEQFIDRTVTPPPVRRNIPMKSVPVAEKTAQIITPFSSE. N-linked (GlcNAc...) asparagine glycosylation is present at N113. The interval 162–574 is catalytic; it reads DDEVVIKSVV…YNRSCKDVTK (413 aa). Residue E256 is the Charge relay system of the active site. N-linked (GlcNAc...) asparagine glycosylation is present at N320. K388 (charge relay system) is an active-site residue. N433 carries N-linked (GlcNAc...) asparagine glycosylation. D464 functions as the Charge relay system in the catalytic mechanism. The Proton donor role is filled by H562. Residue N566 is glycosylated (N-linked (GlcNAc...) asparagine).

The protein belongs to the HMG-CoA reductase family. As to expression, expressed in mature petals and anthers.

It localises to the endoplasmic reticulum membrane. The enzyme catalyses (R)-mevalonate + 2 NADP(+) + CoA = (3S)-3-hydroxy-3-methylglutaryl-CoA + 2 NADPH + 2 H(+). It participates in metabolic intermediate biosynthesis; (R)-mevalonate biosynthesis; (R)-mevalonate from acetyl-CoA: step 3/3. Catalyzes the synthesis of mevalonate. The specific precursor of all isoprenoid compounds present in plants. The protein is 3-hydroxy-3-methylglutaryl-coenzyme A reductase 3 (HMG3) of Solanum tuberosum (Potato).